A 593-amino-acid polypeptide reads, in one-letter code: uncharacterized protein (593 aa).

The next 12 membrane-spanning stretches (helical) occupy residues Pro-21–Tyr-41, Val-60–Ile-80, Phe-97–Phe-117, Met-148–Leu-168, Val-204–Ile-224, Trp-243–Val-263, Met-275–Leu-295, Trp-328–Ala-348, Phe-359–Gly-379, Gly-410–Val-430, Val-457–Gly-477, and Ala-485–Thr-505.

The protein belongs to the BCCT transporter (TC 2.A.15) family.

It is found in the cell membrane. This is an uncharacterized protein from Mycobacterium tuberculosis (strain CDC 1551 / Oshkosh).